We begin with the raw amino-acid sequence, 521 residues long: MANMDIDEFKEFGKAAIDFVADYLVNIRDRDVLPSVEPGYLHDLLPNEIPEKGDDWKTIMEEFKRFIVPGLTHWQSPHFHAFYPSQTSYSSIVGETLAAGLGVVGFSWICSPVCTELEVIMMNWIGQLLNLPRCFLNCDEGNGGGVIQGSASESIFIAVLVAREQAVRRLKNEHPELTEAEIRGRLVAYTSDQSNSAVEKSGILGAIKMRLLPADDDCVLRGRTLKKAVEEDKANGLFPVIMVATLGTTGTCAYDNLEEIGPYCNDNKLWLHVDAAYAGASFCLPEYAWIKKGLEMADSLNFNLHKWLFVNFDCCAMWFKDAAMITEAFSVDRIYLQHKFQGMSKAPDYRHWQIQLGRRFRSLKVWITLKTMGAEKIRELIRFHISLAQKFEQYVRADPRFEVTSSTLALVCFRLKGEDTYSKQLLDNIVKRKKIYMIPATYQGKFILRFMIAGIDPQAEDIDYAWNEVKSQTDLLLGVDDNGNNVCSKKLIKEEIFEKDNPVGKITESLGGLVLANEKAQ.

Lysine 306 carries the post-translational modification N6-(pyridoxal phosphate)lysine.

Belongs to the group II decarboxylase family. Requires pyridoxal 5'-phosphate as cofactor. Highly expressed in the cuticle and midgut. Low expression in the head and thorax.

The enzyme catalyses L-dopa + O2 + H2O + H(+) = 3,4-dihydroxyphenylacetaldehyde + H2O2 + NH4(+) + CO2. Catalyzes the decarboxylation-oxidative deamination of L-3,4-dihydroxyphenylalanine (L-DOPA) to 3,4-dihydroxylphenylacetaldehyde (DHPAA). Involved in cuticle development. Probably responsible for the protein cross-linking during the development of flexible cuticles. The sequence is that of 3,4-dihydroxyphenylacetaldehyde synthase from Aedes aegypti (Yellowfever mosquito).